The chain runs to 265 residues: Type III pantothenate kinase (265 aa).

An ATP-binding site is contributed by 17-24; sequence DIGNTSIS. 114 to 117 serves as a coordination point for substrate; that stretch reads GSDV. Aspartate 116 acts as the Proton acceptor in catalysis. Residue aspartate 137 participates in K(+) binding. Threonine 140 contacts ATP. Substrate is bound at residue threonine 192.

Belongs to the type III pantothenate kinase family. Homodimer. NH4(+) serves as cofactor. K(+) is required as a cofactor.

It localises to the cytoplasm. The catalysed reaction is (R)-pantothenate + ATP = (R)-4'-phosphopantothenate + ADP + H(+). It functions in the pathway cofactor biosynthesis; coenzyme A biosynthesis; CoA from (R)-pantothenate: step 1/5. Functionally, catalyzes the phosphorylation of pantothenate (Pan), the first step in CoA biosynthesis. The polypeptide is Type III pantothenate kinase (Borrelia hermsii (strain HS1 / DAH)).